The sequence spans 617 residues: COMPASS component cclA (617 aa).

2 stretches are compositionally biased toward low complexity: residues 1–19 and 40–50; these read MASI…INSP and SSPAPASNASA. The tract at residues 1-89 is disordered; that stretch reads MASIQPAGSS…AKKRATAVQN (89 aa). The segment covering 57–69 has biased composition (basic residues); it reads SKRNKRDSRKKRE. One can recognise a B30.2/SPRY domain in the interval 157 to 380; it reads IADTSFPHIK…YAFNLKETPT (224 aa). Residues 595 to 617 are disordered; it reads TPNTEEPAARPENITVGHDVEMS.

This sequence belongs to the cclA family. Component of the COMPASS complex.

It is found in the nucleus. The protein localises to the chromosome. The protein resides in the telomere. Component of the COMPASS (Set1C) complex that specifically mono-, di- and trimethylates histone H3 to form H3K4me1/2/3, which subsequently plays a role in telomere length maintenance and transcription elongation regulation. Controls the production of several secondary metabolites, including astellolides. In Aspergillus oryzae (strain ATCC 42149 / RIB 40) (Yellow koji mold), this protein is COMPASS component cclA.